A 494-amino-acid chain; its full sequence is Hydroxyneurosporene desaturase (494 aa).

The protein belongs to the carotenoid/retinoid oxidoreductase family.

It catalyses the reaction rhodopin + A = (3E)-3,4-didehydrorhodopin + AH2. It functions in the pathway carotenoid biosynthesis; spheroidene biosynthesis. Its function is as follows. Catalyzes the introduction of C-3,4 double bonds into 1-hydroxyneurosporene (1-HO-Neu) to yield demethylspheroidene (DMS). The polypeptide is Hydroxyneurosporene desaturase (crtD) (Rhodobacter capsulatus (strain ATCC BAA-309 / NBRC 16581 / SB1003)).